Here is a 386-residue protein sequence, read N- to C-terminus: Tumor necrosis factor receptor superfamily member 10D (386 aa).

Disordered regions lie at residues 1–25 (MGLWGQSVPTASSARAGRYPGARTA) and 62–90 (DEVPQQTVAPQQQRRSLKEEECPAGSHRS). Positions 1–55 (MGLWGQSVPTASSARAGRYPGARTASGTRPWLLDPKILKFVVFIVAVLLPVRVDS) are cleaved as a signal peptide. Residues 56-211 (ATIPRQDEVP…ILGMLASPYH (156 aa)) lie on the Extracellular side of the membrane. TNFR-Cys repeat units follow at residues 58-97 (IPRQDEVPQQTVAPQQQRRSLKEEECPAGSHRSEYTGACN), 98-139 (PCTE…DTVC), and 140-180 (QCEK…DIKC). Residues 64–75 (VPQQTVAPQQQR) show a composition bias toward polar residues. Intrachain disulfides connect Cys-83–Cys-96, Cys-99–Cys-115, Cys-118–Cys-131, Cys-121–Cys-139, Cys-141–Cys-155, Cys-158–Cys-172, and Cys-162–Cys-180. Asn-127 is a glycosylation site (N-linked (GlcNAc...) asparagine). Asn-182 carries an N-linked (GlcNAc...) asparagine glycan. A helical transmembrane segment spans residues 212–232 (YLIIIVVLVIILAVVVVGFSC). Residues 233–386 (RKKFISYLKG…DEAGSATSCL (154 aa)) are Cytoplasmic-facing. The Death; truncated domain occupies 340–366 (SADISTLLDASATLEEGHAKETIQDQL).

As to expression, widely expressed, in particular in fetal kidney, lung and liver, and in adult testis and liver. Also expressed in peripheral blood leukocytes, colon and small intestine, ovary, prostate, thymus, spleen, pancreas, kidney, lung, placenta and heart.

It localises to the membrane. Its function is as follows. Receptor for the cytotoxic ligand TRAIL. Contains a truncated death domain and hence is not capable of inducing apoptosis but protects against TRAIL-mediated apoptosis. Reports are contradictory with regards to its ability to induce the NF-kappa-B pathway. According to PubMed:9382840, it cannot but according to PubMed:9430226, it can induce the NF-kappa-B pathway. This Homo sapiens (Human) protein is Tumor necrosis factor receptor superfamily member 10D.